Reading from the N-terminus, the 370-residue chain is DNA replication and repair protein RecF (370 aa).

Residue 30-37 (GENAQGKT) coordinates ATP.

This sequence belongs to the RecF family.

The protein resides in the cytoplasm. In terms of biological role, the RecF protein is involved in DNA metabolism; it is required for DNA replication and normal SOS inducibility. RecF binds preferentially to single-stranded, linear DNA. It also seems to bind ATP. The protein is DNA replication and repair protein RecF of Staphylococcus aureus (strain bovine RF122 / ET3-1).